Here is a 102-residue protein sequence, read N- to C-terminus: Beta-defensin 116 (102 aa).

Positions 1–23 are cleaved as a signal peptide; that stretch reads MSVMKPCLMTIAILMILAQKTPG. Cystine bridges form between C40–C67, C47–C61, and C51–C68. Residues 83–102 are disordered; that stretch reads EDYDSNSNLSVTNSSSYSHI. Low complexity predominate over residues 87–102; the sequence is SNSNLSVTNSSSYSHI.

This sequence belongs to the beta-defensin family.

The protein localises to the secreted. In terms of biological role, has antibacterial activity. This Homo sapiens (Human) protein is Beta-defensin 116 (DEFB116).